A 239-amino-acid polypeptide reads, in one-letter code: Proteasome activator complex subunit 2 (239 aa).

At A2 the chain carries N-acetylalanine. S10 bears the Phosphoserine mark.

The protein belongs to the PA28 family. Heterodimer of PSME1 and PSME2, which forms a hexameric ring.

In terms of biological role, implicated in immunoproteasome assembly and required for efficient antigen processing. The PA28 activator complex enhances the generation of class I binding peptides by altering the cleavage pattern of the proteasome. This is Proteasome activator complex subunit 2 (PSME2) from Homo sapiens (Human).